Consider the following 383-residue polypeptide: Probable transcriptional repressor C1348.12 (383 aa).

The segment at residues 34-60 (CVICRSKKQKCDGQLPCLYCKKYEYQC) is a DNA-binding region (zn(2)-C6 fungal-type).

The protein localises to the nucleus. Probable transcriptional repressor of multidrug resistance genes. In Schizosaccharomyces pombe (strain 972 / ATCC 24843) (Fission yeast), this protein is Probable transcriptional repressor C1348.12.